Reading from the N-terminus, the 258-residue chain is Ferredoxin--NADP reductase (258 aa).

The FAD-binding FR-type domain occupies 2–102; sequence SNLYTERVLS…RKPTGTLVHD (101 aa). Residues Arg51, Ala52, Tyr53, Ser54, Phe67, Ile69, Leu76, Thr77, and Thr117 each contribute to the FAD site. Residues Val144, Arg145, Thr181, Arg182, Arg190, Ser223, Glu227, Phe255, and Glu257 each coordinate NADP(+). Residues Phe255, Glu257, and Lys258 each coordinate FAD.

This sequence belongs to the ferredoxin--NADP reductase type 1 family. Monomer. FAD is required as a cofactor.

It catalyses the reaction 2 reduced [2Fe-2S]-[ferredoxin] + NADP(+) + H(+) = 2 oxidized [2Fe-2S]-[ferredoxin] + NADPH. Functionally, transports electrons between ferredoxin and NADPH. Provides electrons to heme oxygenase (pigA) allowing anaerobic heme degradation. Provides electrons necessary to reduce and mobilize Fe(3+) in a heterooligomeric bacterioferritin (BFR) complex to Fe(2+). Reduction of Fe(3+) in a pure FtnA BFR does not require Bfd. Reduction of Fe(3+) in a pure BfrB BFR does require Bfd. In Pseudomonas aeruginosa (strain ATCC 15692 / DSM 22644 / CIP 104116 / JCM 14847 / LMG 12228 / 1C / PRS 101 / PAO1), this protein is Ferredoxin--NADP reductase.